Consider the following 274-residue polypeptide: Protein A11 homolog (274 aa).

Positions 106-136 form a coiled coil; the sequence is DDNKRVHLLEQEIAELRKKKTKSKNLLDFTN.

The protein belongs to the poxviridae A11 family. In terms of assembly, homomultimer. Interacts with A32. In terms of processing, phosphorylated by a F10-independent mechanism.

It localises to the host cytoplasm. Required for viral crescent formation early during virus morphogenesis. This is Protein A11 homolog from Fowlpox virus (strain NVSL) (FPV).